A 382-amino-acid polypeptide reads, in one-letter code: ATP phosphoribosyltransferase regulatory subunit (382 aa).

Belongs to the class-II aminoacyl-tRNA synthetase family. HisZ subfamily. In terms of assembly, heteromultimer composed of HisG and HisZ subunits.

It is found in the cytoplasm. It functions in the pathway amino-acid biosynthesis; L-histidine biosynthesis; L-histidine from 5-phospho-alpha-D-ribose 1-diphosphate: step 1/9. Its function is as follows. Required for the first step of histidine biosynthesis. May allow the feedback regulation of ATP phosphoribosyltransferase activity by histidine. The sequence is that of ATP phosphoribosyltransferase regulatory subunit from Burkholderia vietnamiensis (strain G4 / LMG 22486) (Burkholderia cepacia (strain R1808)).